We begin with the raw amino-acid sequence, 155 residues long: 6,7-dimethyl-8-ribityllumazine synthase (155 aa).

Residues F22, A56–E58, and A80–I82 each bind 5-amino-6-(D-ribitylamino)uracil. (2S)-2-hydroxy-3-oxobutyl phosphate is bound at residue S85–T86. Catalysis depends on H88, which acts as the Proton donor. F113 provides a ligand contact to 5-amino-6-(D-ribitylamino)uracil. R127 is a binding site for (2S)-2-hydroxy-3-oxobutyl phosphate.

Belongs to the DMRL synthase family.

It carries out the reaction (2S)-2-hydroxy-3-oxobutyl phosphate + 5-amino-6-(D-ribitylamino)uracil = 6,7-dimethyl-8-(1-D-ribityl)lumazine + phosphate + 2 H2O + H(+). The protein operates within cofactor biosynthesis; riboflavin biosynthesis; riboflavin from 2-hydroxy-3-oxobutyl phosphate and 5-amino-6-(D-ribitylamino)uracil: step 1/2. Functionally, catalyzes the formation of 6,7-dimethyl-8-ribityllumazine by condensation of 5-amino-6-(D-ribitylamino)uracil with 3,4-dihydroxy-2-butanone 4-phosphate. This is the penultimate step in the biosynthesis of riboflavin. This chain is 6,7-dimethyl-8-ribityllumazine synthase, found in Caldicellulosiruptor bescii (strain ATCC BAA-1888 / DSM 6725 / KCTC 15123 / Z-1320) (Anaerocellum thermophilum).